The chain runs to 470 residues: Glutamyl-tRNA reductase (470 aa).

Substrate contacts are provided by residues 49 to 52 (TCNR), S109, 114 to 116 (ESQ), and Q120. The active-site Nucleophile is the C50. 223–228 (GAGAVG) provides a ligand contact to NADP(+).

It belongs to the glutamyl-tRNA reductase family. Homodimer.

It catalyses the reaction (S)-4-amino-5-oxopentanoate + tRNA(Glu) + NADP(+) = L-glutamyl-tRNA(Glu) + NADPH + H(+). It functions in the pathway porphyrin-containing compound metabolism; protoporphyrin-IX biosynthesis; 5-aminolevulinate from L-glutamyl-tRNA(Glu): step 1/2. Catalyzes the NADPH-dependent reduction of glutamyl-tRNA(Glu) to glutamate 1-semialdehyde (GSA). The protein is Glutamyl-tRNA reductase of Frankia alni (strain DSM 45986 / CECT 9034 / ACN14a).